Here is a 104-residue protein sequence, read N- to C-terminus: Large ribosomal subunit protein bL21 (104 aa).

It belongs to the bacterial ribosomal protein bL21 family. Part of the 50S ribosomal subunit. Contacts protein L20.

Its function is as follows. This protein binds to 23S rRNA in the presence of protein L20. This chain is Large ribosomal subunit protein bL21, found in Streptococcus sanguinis (strain SK36).